The primary structure comprises 433 residues: Deoxyguanosinetriphosphate triphosphohydrolase-like protein 2 (433 aa).

Residues 61 to 248 (RLTHSLEVAQ…METADDIAYT (188 aa)) form the HD domain.

It belongs to the dGTPase family. Type 2 subfamily.

The sequence is that of Deoxyguanosinetriphosphate triphosphohydrolase-like protein 2 from Deinococcus radiodurans (strain ATCC 13939 / DSM 20539 / JCM 16871 / CCUG 27074 / LMG 4051 / NBRC 15346 / NCIMB 9279 / VKM B-1422 / R1).